Here is a 37-residue protein sequence, read N- to C-terminus: Cytochrome b6-f complex subunit 7 (37 aa).

Residues 11–29 (AVILMVLVLFGLAWGFLIL) form a helical membrane-spanning segment.

This sequence belongs to the PetM family. In terms of assembly, the 4 large subunits of the cytochrome b6-f complex are cytochrome b6, subunit IV (17 kDa polypeptide, PetD), cytochrome f and the Rieske protein, while the 4 small subunits are PetG, PetL, PetM and PetN. The complex functions as a dimer.

The protein resides in the cellular thylakoid membrane. Component of the cytochrome b6-f complex, which mediates electron transfer between photosystem II (PSII) and photosystem I (PSI), cyclic electron flow around PSI, and state transitions. In Crocosphaera subtropica (strain ATCC 51142 / BH68) (Cyanothece sp. (strain ATCC 51142)), this protein is Cytochrome b6-f complex subunit 7.